A 55-amino-acid polypeptide reads, in one-letter code: MASDRKSEGFQSGAGLIRYFEEEEIKGPALDPKLVVYMGIAVAIIVEIAKIFWPP.

At 1-31 (MASDRKSEGFQSGAGLIRYFEEEEIKGPALD) the chain is on the cytoplasmic side. Residues 32 to 51 (PKLVVYMGIAVAIIVEIAKI) traverse the membrane as a helical segment. The Extracellular portion of the chain corresponds to 52-55 (FWPP).

It belongs to the SEC61-beta family. Component of the protein translocase complex. Heterotrimer consisting of alpha (SecY), beta (SecG) and gamma (SecE) subunits. Can form oligomers of the heterotrimer.

It localises to the cell membrane. Functionally, involved in protein export. The function of the beta subunit is unknown, but it may be involved in stabilization of the trimeric complex. In Thermoplasma acidophilum (strain ATCC 25905 / DSM 1728 / JCM 9062 / NBRC 15155 / AMRC-C165), this protein is Preprotein translocase subunit SecG (secG).